The sequence spans 581 residues: MAGRIPRVFINDLLARTDIVDLIDARVKLKKQGKNFHACCPFHNEKTPSFTVNGEKQFYHCFGCGAHGNAIDFLMNYDKLEFVETVEELAAMHNLEVPFEAGSGPSQIERHQRQTLYQLMDGLNTFYQQSLQQPVATSARQYLEKRGLSHEVIARFAIGFAPPGWDNVLKRFGGNPENRQSLIDAGMLVTNDQGRSYDRFRERVMFPIRDKRGRVIGFGGRVLGNDTPKYLNSPETDIFHKGRQLYGLYEAQQDNAEPNRLLVVEGYMDVVALAQYGINYAVASLGTSTTADHIQLLFRATNNVICCYDGDRAGRDAAWRALETALPYMTDGRQLRFMFLPDGEDPDTLVRKEGKEAFEARMEQAMPLSAFLFNSLMPQVDLSTPDGRARLSTLALPLISQVPGETLRIYLRQELGNKLGILDDSQLERLMPKAAESGVSRPVPQLKRTTMRILIGLLVQNPELATLVPPLENLDENKLPGLGLFRELVNTCLSQPGLTTGQLLEHYRGTNNAATLEKLSMWDDIADKNIAEQTFTDSLNHMFDSLLELRQEELIARERTHGLSNEERLELWTLNQELAKK.

The segment at 40 to 64 (CPFHNEKTPSFTVNGEKQFYHCFGC) adopts a CHC2-type zinc-finger fold. Positions 259–341 (NRLLVVEGYM…GRQLRFMFLP (83 aa)) constitute a Toprim domain. The Mg(2+) site is built by glutamate 265, aspartate 309, and aspartate 311.

Belongs to the DnaG primase family. Monomer. Interacts with DnaB. Zn(2+) serves as cofactor. Requires Mg(2+) as cofactor.

The catalysed reaction is ssDNA + n NTP = ssDNA/pppN(pN)n-1 hybrid + (n-1) diphosphate.. Functionally, RNA polymerase that catalyzes the synthesis of short RNA molecules used as primers for DNA polymerase during DNA replication. The polypeptide is DNA primase (Shigella flexneri).